The chain runs to 447 residues: Tubulin beta chain (447 aa).

Residues Gln11, Glu69, Ser138, Gly142, Thr143, Gly144, Asn204, and Asn226 each contribute to the GTP site. Residue Glu69 participates in Mg(2+) binding. Positions 424–447 (QYQEASVSEGEEEYDEEAPLEAEE) are disordered. Residues 432-447 (EGEEEYDEEAPLEAEE) show a composition bias toward acidic residues.

It belongs to the tubulin family. In terms of assembly, dimer of alpha and beta chains. A typical microtubule is a hollow water-filled tube with an outer diameter of 25 nm and an inner diameter of 15 nM. Alpha-beta heterodimers associate head-to-tail to form protofilaments running lengthwise along the microtubule wall with the beta-tubulin subunit facing the microtubule plus end conferring a structural polarity. Microtubules usually have 13 protofilaments but different protofilament numbers can be found in some organisms and specialized cells. Mg(2+) serves as cofactor.

It localises to the cytoplasm. The protein resides in the cytoskeleton. Tubulin is the major constituent of microtubules, a cylinder consisting of laterally associated linear protofilaments composed of alpha- and beta-tubulin heterodimers. Microtubules grow by the addition of GTP-tubulin dimers to the microtubule end, where a stabilizing cap forms. Below the cap, tubulin dimers are in GDP-bound state, owing to GTPase activity of alpha-tubulin. The chain is Tubulin beta chain (TUB1) from Cochliobolus heterostrophus (Southern corn leaf blight fungus).